Consider the following 274-residue polypeptide: Rhamnulose-1-phosphate aldolase (274 aa).

Glutamate 117 is an active-site residue. Zn(2+)-binding residues include histidine 141, histidine 143, and histidine 212.

The protein belongs to the aldolase class II family. RhaD subfamily. In terms of assembly, homotetramer. Zn(2+) serves as cofactor.

The protein localises to the cytoplasm. The catalysed reaction is L-rhamnulose 1-phosphate = (S)-lactaldehyde + dihydroxyacetone phosphate. It functions in the pathway carbohydrate degradation; L-rhamnose degradation; glycerone phosphate from L-rhamnose: step 3/3. Catalyzes the reversible cleavage of L-rhamnulose-1-phosphate to dihydroxyacetone phosphate (DHAP) and L-lactaldehyde. In Shigella dysenteriae serotype 1 (strain Sd197), this protein is Rhamnulose-1-phosphate aldolase.